A 375-amino-acid polypeptide reads, in one-letter code: Phosphate acyltransferase (375 aa).

The tract at residues 354-375 (AQDDATSADADAPGDSETGSTN) is disordered. The segment covering 356–368 (DDATSADADAPGD) has biased composition (low complexity).

This sequence belongs to the PlsX family. Homodimer. Probably interacts with PlsY.

It localises to the cytoplasm. It carries out the reaction a fatty acyl-[ACP] + phosphate = an acyl phosphate + holo-[ACP]. It participates in lipid metabolism; phospholipid metabolism. In terms of biological role, catalyzes the reversible formation of acyl-phosphate (acyl-PO(4)) from acyl-[acyl-carrier-protein] (acyl-ACP). This enzyme utilizes acyl-ACP as fatty acyl donor, but not acyl-CoA. This Ruegeria sp. (strain TM1040) (Silicibacter sp.) protein is Phosphate acyltransferase.